The following is a 516-amino-acid chain: Ammonium transporter Amt1 (516 aa).

11 consecutive transmembrane segments (helical) span residues 17-37, 59-79, 101-121, 130-150, 170-190, 214-234, 258-278, 286-306, 307-327, 342-362, and 374-394; these read YVWILVVSFLIFFMQPGFALL, ALGVLVYFVVGAGVATIVGGL, IDWLFGAVFAMTAATIVSGAV, YVVFAATITGFIYPVVQGLTW, LDFAGATVVHMCGGVAGLVGA, MLLAVLGTLILAFGWYGFNVG, VALVTTLGMGAGAVAAMVVST, PLWMANGLLAGLVAVTGAVPH, VTWWGGLVLGALGGAIVLPAY, VFAVHGVAGAVGTALIPVFAV, and VAGVGIIALWTIVASAVVFAA. The tract at residues 426–516 is disordered; the sequence is IGESGPDRGV…SAAVDGGENQ (91 aa). The segment covering 445–491 has biased composition (basic and acidic residues); sequence NDVRTDGGNDVRTDGGNDVRTDGGNDVRTDGGNDVRTDGGNDVRTDG.

It belongs to the ammonia transporter channel (TC 1.A.11.2) family. As to quaternary structure, homotrimer. Interacts with both GlnK1 and GlnK2 after ammonium shock. Interaction is rapid, reversible and dependent on nitrogen source.

It is found in the cell membrane. In terms of biological role, involved in the uptake of ammonium/ammonia (NH(4)(+)/NH(3)). Transport is electrogenic. The polypeptide is Ammonium transporter Amt1 (Haloferax mediterranei (strain ATCC 33500 / DSM 1411 / JCM 8866 / NBRC 14739 / NCIMB 2177 / R-4) (Halobacterium mediterranei)).